The primary structure comprises 315 residues: Olfactory receptor 2V2 (315 aa).

The Extracellular segment spans residues 1–26 (METWVNQSYTDGFFLLGIFSHSTADL). Asn-6 carries N-linked (GlcNAc...) asparagine glycosylation. A helical membrane pass occupies residues 27-50 (VLFSVVMAVFTVALCGNVLLIFLI). At 51-58 (YMDPHLHT) the chain is on the cytoplasmic side. The chain crosses the membrane as a helical span at residues 59-80 (PMYFFLSQLSLMDLMLVCTNVP). Residues 81 to 101 (KMAANFLSGRKSISFVGCGIQ) lie on the Extracellular side of the membrane. Residues Cys-98 and Cys-190 are joined by a disulfide bond. Residues 102–121 (IGLFVCLVGSEGLLLGLMAY) traverse the membrane as a helical segment. The Cytoplasmic portion of the chain corresponds to 122–140 (DRYVAISHPLHYPILMNQR). The helical transmembrane segment at 141–159 (VCLQITGSSWAFGIIDGLI) threads the bilayer. The Extracellular segment spans residues 160–196 (QMVVVMNFPYCGLRKVNHFFCEMLSLLKLACVDTSLF). A helical transmembrane segment spans residues 197 to 220 (EKVIFACCVFMLLFPFSIIVASYA). At 221–237 (HILGTVLQMHSAQAWKK) the chain is on the cytoplasmic side. The chain crosses the membrane as a helical span at residues 238 to 260 (ALATCSSHLTAVTLFYGAAMFIY). The Extracellular portion of the chain corresponds to 261–273 (LRPRHYRAPSHDK). Residues 274-293 (VASIFYTVLTPMLNPLIYSL) traverse the membrane as a helical segment. Residues 294–315 (RNREVMGALRKGLDRCRIGSQH) lie on the Cytoplasmic side of the membrane.

This sequence belongs to the G-protein coupled receptor 1 family.

The protein resides in the cell membrane. Its function is as follows. Odorant receptor. In Homo sapiens (Human), this protein is Olfactory receptor 2V2 (OR2V2).